The chain runs to 347 residues: Protein-glutamate methylesterase/protein-glutamine glutaminase 2 (347 aa).

Residues 2–119 (RVMIVDDSAV…LGGADLYRKD (118 aa)) enclose the Response regulatory domain. 4-aspartylphosphate is present on Asp52. Residues 131–153 (AARPAPPQAAPRPTLAPPSSDPA) form a disordered region. Over residues 134–150 (PAPPQAAPRPTLAPPSS) the composition is skewed to pro residues. The CheB-type methylesterase domain occupies 152–346 (PAGPIEAVVV…PYIASRARSV (195 aa)). Residues Ser164, His191, and Asp288 contribute to the active site.

The protein belongs to the CheB family. Phosphorylated by CheA. Phosphorylation of the N-terminal regulatory domain activates the methylesterase activity.

It is found in the cytoplasm. It catalyses the reaction [protein]-L-glutamate 5-O-methyl ester + H2O = L-glutamyl-[protein] + methanol + H(+). The catalysed reaction is L-glutaminyl-[protein] + H2O = L-glutamyl-[protein] + NH4(+). In terms of biological role, involved in chemotaxis. Part of a chemotaxis signal transduction system that modulates chemotaxis in response to various stimuli. Catalyzes the demethylation of specific methylglutamate residues introduced into the chemoreceptors (methyl-accepting chemotaxis proteins or MCP) by CheR. Also mediates the irreversible deamidation of specific glutamine residues to glutamic acid. In Caulobacter vibrioides (strain ATCC 19089 / CIP 103742 / CB 15) (Caulobacter crescentus), this protein is Protein-glutamate methylesterase/protein-glutamine glutaminase 2.